The primary structure comprises 294 residues: Cyclin-G1 (294 aa).

It belongs to the cyclin family. Cyclin G subfamily. Binds to B' regulatory B subunits of protein phosphatase A (PP2A) following induction by p53 (in vitro). In terms of tissue distribution, highest levels in kidney, heart and skeletal muscle.

The protein localises to the nucleus. May play a role in growth regulation. Is associated with G2/M phase arrest in response to DNA damage. May be an intermediate by which p53 mediates its role as an inhibitor of cellular proliferation. This is Cyclin-G1 (Ccng1) from Mus musculus (Mouse).